Consider the following 1042-residue polypeptide: Isoleucine--tRNA ligase (1042 aa).

The short motif at 48–58 is the 'HIGH' region element; the sequence is PFATGLPHFGH. Positions 594–598 match the 'KMSKS' region motif; it reads KMSKS. K597 is an ATP binding site.

This sequence belongs to the class-I aminoacyl-tRNA synthetase family. IleS type 2 subfamily. In terms of assembly, monomer. Zn(2+) is required as a cofactor.

Its subcellular location is the cytoplasm. The catalysed reaction is tRNA(Ile) + L-isoleucine + ATP = L-isoleucyl-tRNA(Ile) + AMP + diphosphate. Catalyzes the attachment of isoleucine to tRNA(Ile). As IleRS can inadvertently accommodate and process structurally similar amino acids such as valine, to avoid such errors it has two additional distinct tRNA(Ile)-dependent editing activities. One activity is designated as 'pretransfer' editing and involves the hydrolysis of activated Val-AMP. The other activity is designated 'posttransfer' editing and involves deacylation of mischarged Val-tRNA(Ile). In Borrelia garinii subsp. bavariensis (strain ATCC BAA-2496 / DSM 23469 / PBi) (Borreliella bavariensis), this protein is Isoleucine--tRNA ligase.